Consider the following 420-residue polypeptide: Gamma-glutamyl phosphate reductase (420 aa).

Belongs to the gamma-glutamyl phosphate reductase family.

It is found in the cytoplasm. The enzyme catalyses L-glutamate 5-semialdehyde + phosphate + NADP(+) = L-glutamyl 5-phosphate + NADPH + H(+). It functions in the pathway amino-acid biosynthesis; L-proline biosynthesis; L-glutamate 5-semialdehyde from L-glutamate: step 2/2. In terms of biological role, catalyzes the NADPH-dependent reduction of L-glutamate 5-phosphate into L-glutamate 5-semialdehyde and phosphate. The product spontaneously undergoes cyclization to form 1-pyrroline-5-carboxylate. In Streptococcus gordonii (strain Challis / ATCC 35105 / BCRC 15272 / CH1 / DL1 / V288), this protein is Gamma-glutamyl phosphate reductase.